The following is a 48-amino-acid chain: Delta-actitoxin-Bgr2b (48 aa).

3 disulfide bridges follow: C4-C45, C6-C35, and C28-C46.

This sequence belongs to the sea anemone sodium channel inhibitory toxin family. Type I subfamily.

It localises to the secreted. It is found in the nematocyst. In terms of biological role, binds voltage-dependently at site 3 of sodium channels (Nav) and inhibits the inactivation of the activated channels, thereby blocking neuronal transmission. Has effect on SCN4A/SCN1B, and SCN5A/SCN1B, has no effect on SCN2A/SCN1B, and SCN10A/SCN1B. Possesses the highest efficacy for the insect sodium channel para/tipE. Also interacts with sodium channels in cardiac cells. Shows lethality to crabs. In Bunodosoma granuliferum (Red warty sea anemone), this protein is Delta-actitoxin-Bgr2b.